Reading from the N-terminus, the 233-residue chain is Ribosomal RNA-processing protein 14-C (233 aa).

The stretch at 32 to 65 (DRALLLQRRKEKAKARAEAKKLAKKESKAKQESK) forms a coiled coil. The segment covering 47–64 (RAEAKKLAKKESKAKQES) has biased composition (basic and acidic residues). Disordered regions lie at residues 47 to 87 (RAEA…DNHK), 130 to 149 (KRRI…ESDK), and 164 to 233 (DNEQ…SKKK). Residue Ser75 is modified to Phosphoserine. The stretch at 122 to 223 (ALKHLEAKKR…ESKKSKKGKA (102 aa)) forms a coiled coil. Composition is skewed to basic and acidic residues over residues 133-149 (IESM…ESDK) and 180-209 (KKKS…EENL). Over residues 210 to 233 (KKRRESKKSKKGKAPKKKKPSKKK) the composition is skewed to basic residues.

The protein belongs to the SURF6 family. As to quaternary structure, component of the 90S and 60S pre-ribosomal particles.

Its subcellular location is the nucleus. The protein localises to the nucleolus. Involved in ribosome biogenesis and cell polarity. Required for the synthesis of both 40S and 60S ribosomal subunits and may also play some direct role in correct positioning of the mitotic spindle during mitosis. The chain is Ribosomal RNA-processing protein 14-C (rrp14c) from Schizosaccharomyces pombe (strain 972 / ATCC 24843) (Fission yeast).